Consider the following 94-residue polypeptide: Small ribosomal subunit protein bS20 (94 aa).

The protein belongs to the bacterial ribosomal protein bS20 family.

Functionally, binds directly to 16S ribosomal RNA. This chain is Small ribosomal subunit protein bS20, found in Acaryochloris marina (strain MBIC 11017).